The chain runs to 184 residues: MKLLAIVGTNADFSYNRFLDQFMAKRYKDQAEIEVYEIADLPRFKKEAQPDSKVEEFKNKIREADGVIFATPEYDHGIPSALKSAMEWTGSHAQGNADVMKMKPAMVLGTSYGIQGASRAQEEMREILLSPDQSANVLPGNEVLIGHAADKFDKNTGDLLDQETIHAIDLAFNNFVKFVEQAQK.

This sequence belongs to the NADH-dependent flavin reductase family. As to quaternary structure, requires LJ_0548 for activity, but the exact composition of the enzyme is unclear.

It carries out the reaction a reduced flavin + NAD(+) = an oxidized flavin + NADH + 2 H(+). In terms of biological role, component of an enzyme that catalyzes the reduction of free flavins (FMN, FAD and riboflavin) by NADH; the reduced flavins produced by this reaction likely spontaneously react with oxygen, yielding hydrogen peroxide. Is responsible for the major H(2)O(2) production in L.johnsonii in the presence of oxygen. Cannot use NADPH instead of NADH as the electron donor. The protein is NADH-dependent flavin reductase subunit 2 (nfr2) of Lactobacillus johnsonii (strain CNCM I-12250 / La1 / NCC 533).